We begin with the raw amino-acid sequence, 380 residues long: Ribosomal RNA small subunit methyltransferase, mitochondrial (380 aa).

A mitochondrion-targeting transit peptide spans 1–26; it reads MILRLKDQTLIKINSTRSYLSSLVFR. Residues His-70, Leu-72, Gly-97, Glu-118, Asp-146, and Asn-161 each contribute to the S-adenosyl-L-methionine site.

This sequence belongs to the class I-like SAM-binding methyltransferase superfamily. rRNA adenine N(6)-methyltransferase family.

The protein resides in the mitochondrion. It catalyses the reaction adenosine(1914)/adenosine(1915) in 18S rRNA + 4 S-adenosyl-L-methionine = N(6)-dimethyladenosine(1914)/N(6)-dimethyladenosine(1915) in 18S rRNA + 4 S-adenosyl-L-homocysteine + 4 H(+). In terms of biological role, N6-adenine methyltransferase which modifies the AA dinucleotide at the plant mitochondrial 18S rRNA nucleotides A1914 and A1915. Not active as mitochondrial transcription factor. The polypeptide is Ribosomal RNA small subunit methyltransferase, mitochondrial (Arabidopsis thaliana (Mouse-ear cress)).